Consider the following 186-residue polypeptide: Holliday junction branch migration complex subunit RuvA (186 aa).

The tract at residues 1–63 is domain I; that stretch reads MNDYINGLLH…DNVFKYYGFK (63 aa). A domain II region spans residues 64 to 137; that stretch reads NQLIRDLFEL…QKELFNNKIS (74 aa). Position 137 (Ser137) is a region of interest, flexible linker. The segment at 137–186 is domain III; sequence SDKKNKVITSLEKLGYKTKDIYKIIINIDEDMNIEDLTKYVLEQLSYLHN.

It belongs to the RuvA family. In terms of assembly, homotetramer. Forms an RuvA(8)-RuvB(12)-Holliday junction (HJ) complex. HJ DNA is sandwiched between 2 RuvA tetramers; dsDNA enters through RuvA and exits via RuvB. An RuvB hexamer assembles on each DNA strand where it exits the tetramer. Each RuvB hexamer is contacted by two RuvA subunits (via domain III) on 2 adjacent RuvB subunits; this complex drives branch migration. In the full resolvosome a probable DNA-RuvA(4)-RuvB(12)-RuvC(2) complex forms which resolves the HJ.

The protein localises to the cytoplasm. The RuvA-RuvB-RuvC complex processes Holliday junction (HJ) DNA during genetic recombination and DNA repair, while the RuvA-RuvB complex plays an important role in the rescue of blocked DNA replication forks via replication fork reversal (RFR). RuvA specifically binds to HJ cruciform DNA, conferring on it an open structure. The RuvB hexamer acts as an ATP-dependent pump, pulling dsDNA into and through the RuvAB complex. HJ branch migration allows RuvC to scan DNA until it finds its consensus sequence, where it cleaves and resolves the cruciform DNA. The polypeptide is Holliday junction branch migration complex subunit RuvA (Mycoplasma mycoides subsp. mycoides SC (strain CCUG 32753 / NCTC 10114 / PG1)).